The sequence spans 130 residues: Small ribosomal subunit protein uS9 (130 aa).

This sequence belongs to the universal ribosomal protein uS9 family.

In Bacillus velezensis (strain DSM 23117 / BGSC 10A6 / LMG 26770 / FZB42) (Bacillus amyloliquefaciens subsp. plantarum), this protein is Small ribosomal subunit protein uS9.